The primary structure comprises 130 residues: Small ribosomal subunit protein uS8 (130 aa).

Belongs to the universal ribosomal protein uS8 family. As to quaternary structure, part of the 30S ribosomal subunit. Contacts proteins S5 and S12.

Functionally, one of the primary rRNA binding proteins, it binds directly to 16S rRNA central domain where it helps coordinate assembly of the platform of the 30S subunit. The protein is Small ribosomal subunit protein uS8 of Neisseria meningitidis serogroup C (strain 053442).